The chain runs to 129 residues: MSTKVENILEELKSLNLLEAAELVNTIEETFDVDASAASGGMMMATPTSAPASAEVEEKTEFDVVLEEVPAPKKISVLKVVRPLTGLGLKEAKDLVESTPKVLKEGASKDDAETMKKQLEDAGATVIVK.

It belongs to the bacterial ribosomal protein bL12 family. As to quaternary structure, homodimer. Part of the ribosomal stalk of the 50S ribosomal subunit. Forms a multimeric L10(L12)X complex, where L10 forms an elongated spine to which 2 to 4 L12 dimers bind in a sequential fashion. Binds GTP-bound translation factors.

It localises to the plastid. It is found in the chloroplast. Forms part of the ribosomal stalk which helps the ribosome interact with GTP-bound translation factors. Is thus essential for accurate translation. In Pyropia yezoensis (Susabi-nori), this protein is Large ribosomal subunit protein bL12c.